Here is a 413-residue protein sequence, read N- to C-terminus: ATP-dependent RNA helicase RhlB (413 aa).

A Q motif motif is present at residues 9–37; the sequence is QRFADLPLHPQILAALNDQNFEYCTPIQA. Positions 40 to 217 constitute a Helicase ATP-binding domain; that stretch reads LPLTLQGKDV…FEDMNDPEYI (178 aa). 53-60 serves as a coordination point for ATP; the sequence is AQTGTGKT. Positions 163 to 166 match the DEAD box motif; it reads DEAD. A Helicase C-terminal domain is found at 241 to 388; that stretch reads KMALLMTLLE…VSQYDPDSLI (148 aa).

The protein belongs to the DEAD box helicase family. RhlB subfamily. Component of the RNA degradosome, which is a multiprotein complex involved in RNA processing and mRNA degradation.

It localises to the cytoplasm. It catalyses the reaction ATP + H2O = ADP + phosphate + H(+). In terms of biological role, DEAD-box RNA helicase involved in RNA degradation. Has RNA-dependent ATPase activity and unwinds double-stranded RNA. In Actinobacillus succinogenes (strain ATCC 55618 / DSM 22257 / CCUG 43843 / 130Z), this protein is ATP-dependent RNA helicase RhlB.